We begin with the raw amino-acid sequence, 157 residues long: Arginine repressor (157 aa).

This sequence belongs to the ArgR family.

The protein resides in the cytoplasm. The protein operates within amino-acid biosynthesis; L-arginine biosynthesis [regulation]. Functionally, regulates arginine biosynthesis genes. This Bacteroides fragilis (strain ATCC 25285 / DSM 2151 / CCUG 4856 / JCM 11019 / LMG 10263 / NCTC 9343 / Onslow / VPI 2553 / EN-2) protein is Arginine repressor.